Reading from the N-terminus, the 163-residue chain is NADH-quinone oxidoreductase subunit I (163 aa).

2 4Fe-4S ferredoxin-type domains span residues 54-84 and 94-123; these read LRRY…IESD and TRYD…ETQI. Residues Cys64, Cys67, Cys70, Cys74, Cys103, Cys106, Cys109, and Cys113 each contribute to the [4Fe-4S] cluster site.

It belongs to the complex I 23 kDa subunit family. As to quaternary structure, NDH-1 is composed of 14 different subunits. Subunits NuoA, H, J, K, L, M, N constitute the membrane sector of the complex. The cofactor is [4Fe-4S] cluster.

Its subcellular location is the cell inner membrane. It catalyses the reaction a quinone + NADH + 5 H(+)(in) = a quinol + NAD(+) + 4 H(+)(out). Its function is as follows. NDH-1 shuttles electrons from NADH, via FMN and iron-sulfur (Fe-S) centers, to quinones in the respiratory chain. The immediate electron acceptor for the enzyme in this species is believed to be ubiquinone. Couples the redox reaction to proton translocation (for every two electrons transferred, four hydrogen ions are translocated across the cytoplasmic membrane), and thus conserves the redox energy in a proton gradient. This is NADH-quinone oxidoreductase subunit I from Cupriavidus necator (strain ATCC 17699 / DSM 428 / KCTC 22496 / NCIMB 10442 / H16 / Stanier 337) (Ralstonia eutropha).